Here is a 308-residue protein sequence, read N- to C-terminus: tRNA pseudouridine synthase B (308 aa).

The active-site Nucleophile is the aspartate 47.

Belongs to the pseudouridine synthase TruB family. Type 1 subfamily.

The enzyme catalyses uridine(55) in tRNA = pseudouridine(55) in tRNA. In terms of biological role, responsible for synthesis of pseudouridine from uracil-55 in the psi GC loop of transfer RNAs. The sequence is that of tRNA pseudouridine synthase B from Xanthomonas euvesicatoria pv. vesicatoria (strain 85-10) (Xanthomonas campestris pv. vesicatoria).